The sequence spans 594 residues: Alanine--tRNA ligase (594 aa).

H456, H460, C558, and H562 together coordinate Zn(2+).

Belongs to the class-II aminoacyl-tRNA synthetase family. Requires Zn(2+) as cofactor.

The protein resides in the cytoplasm. The enzyme catalyses tRNA(Ala) + L-alanine + ATP = L-alanyl-tRNA(Ala) + AMP + diphosphate. Functionally, catalyzes the attachment of alanine to tRNA(Ala) in a two-step reaction: alanine is first activated by ATP to form Ala-AMP and then transferred to the acceptor end of tRNA(Ala). Also edits incorrectly charged Ser-tRNA(Ala) and Gly-tRNA(Ala) via its editing domain. In Borreliella burgdorferi (strain ATCC 35210 / DSM 4680 / CIP 102532 / B31) (Borrelia burgdorferi), this protein is Alanine--tRNA ligase (alaS).